A 474-amino-acid chain; its full sequence is Tocopherol cyclase, chloroplastic (474 aa).

Residues 1-65 constitute a chloroplast transit peptide; that stretch reads MNLAVAAALP…TPTPQDRSLR (65 aa).

In terms of tissue distribution, present in all green tissues, both in bundle sheath and in mesophyll cells.

It is found in the plastid. It localises to the chloroplast. It carries out the reaction gamma-tocopherol = 2,3-dimethyl-6-phytylbenzene-1,4-diol. The protein operates within cofactor biosynthesis; tocopherol biosynthesis. Functionally, involved in the synthesis of tocopherols (vitamin E), which presumably protect photosynthetic complexes from oxidative stress. Catalyzes the conversion of 2,3-dimethyl-5-phytyl-1,4-hydroquinone (DMPQ) to gamma-tocopherol. The chain is Tocopherol cyclase, chloroplastic from Zea mays (Maize).